Reading from the N-terminus, the 665-residue chain is Cinnamate reductase (665 aa).

An FMN-binding site is contributed by Gln-109. The Proton donor role is filled by Tyr-182. Residues Arg-230, Arg-319, and 341 to 342 (GR) contribute to the FMN site. Residues Cys-365, Cys-368, Cys-372, and Cys-384 each contribute to the [4Fe-4S] cluster site. The FAD site is built by Ala-415, Glu-434, Asn-442, Lys-452, and Ala-479.

The protein in the N-terminal section; belongs to the NADH:flavin oxidoreductase/NADH oxidase family. FMN is required as a cofactor. The cofactor is FAD. [4Fe-4S] cluster serves as cofactor.

The enzyme catalyses 3-phenylpropanoate + NAD(+) = (E)-cinnamate + NADH + H(+). It functions in the pathway amino-acid degradation; L-phenylalanine degradation. Involved in the fermentation of L-phenylalanine via a Stickland reaction. Catalyzes the reduction of (E)-cinnamate to yield 3-phenylpropionate. The protein is Cinnamate reductase of Clostridium sporogenes (strain ATCC 7955 / DSM 767 / NBRC 16411 / NCIMB 8053 / NCTC 8594 / PA 3679).